A 398-amino-acid polypeptide reads, in one-letter code: Serpin-Z1C (398 aa).

The tract at residues 343–367 is RCL; that stretch reads GTEAAASTAIKMALLQARPPSVMDF.

It belongs to the serpin family.

Its function is as follows. Inhibits chymotrypsin and cathepsin G in vitro. The polypeptide is Serpin-Z1C (Triticum aestivum (Wheat)).